A 220-amino-acid chain; its full sequence is Ribose-5-phosphate isomerase A (220 aa).

Residues 29–32 (TGST), 82–85 (DGCD), and 95–98 (KGGG) each bind substrate. Glu-104 serves as the catalytic Proton acceptor. A substrate-binding site is contributed by Lys-122.

It belongs to the ribose 5-phosphate isomerase family. As to quaternary structure, homodimer.

The enzyme catalyses aldehydo-D-ribose 5-phosphate = D-ribulose 5-phosphate. The protein operates within carbohydrate degradation; pentose phosphate pathway; D-ribose 5-phosphate from D-ribulose 5-phosphate (non-oxidative stage): step 1/1. Its function is as follows. Catalyzes the reversible conversion of ribose-5-phosphate to ribulose 5-phosphate. This Laribacter hongkongensis (strain HLHK9) protein is Ribose-5-phosphate isomerase A.